Here is a 588-residue protein sequence, read N- to C-terminus: Aspartate--tRNA ligase (588 aa).

Glu-177 contributes to the L-aspartate binding site. Residues 201–204 (QLFK) are aspartate. Residue Arg-223 participates in L-aspartate binding. ATP contacts are provided by residues 223–225 (RDE) and Gln-232. Residue His-451 participates in L-aspartate binding. Residue Glu-485 participates in ATP binding. Arg-492 contributes to the L-aspartate binding site. 537–540 (GLDR) provides a ligand contact to ATP.

It belongs to the class-II aminoacyl-tRNA synthetase family. Type 1 subfamily. As to quaternary structure, homodimer.

Its subcellular location is the cytoplasm. The enzyme catalyses tRNA(Asp) + L-aspartate + ATP = L-aspartyl-tRNA(Asp) + AMP + diphosphate. Catalyzes the attachment of L-aspartate to tRNA(Asp) in a two-step reaction: L-aspartate is first activated by ATP to form Asp-AMP and then transferred to the acceptor end of tRNA(Asp). The protein is Aspartate--tRNA ligase of Staphylococcus aureus (strain NCTC 8325 / PS 47).